The sequence spans 485 residues: Forkhead box protein N3 (485 aa).

Residues 1–21 (MGPVMPPSKKPESPGISVSSG) are disordered. S83, S85, and S97 each carry phosphoserine. The segment at 86–108 (PVQDLDDDTPPSPAHSDMPYDAR) is disordered. Residues 114 to 210 (KPPYSFSCLI…QALKKTPYHS (97 aa)) constitute a DNA-binding region (fork-head). The tract at residues 315–454 (RTESEPSCGS…DEEMKEAAGS (140 aa)) is disordered. Residues 338-359 (SSAKSSHARSTSPASDCVSSSS) show a composition bias toward low complexity. The segment covering 382-404 (HESHSETEEDDRKCSPKEAKDAL) has biased composition (basic and acidic residues). Residues 412–424 (QHKKRQHFAKARK) show a composition bias toward basic residues. Phosphoserine is present on S443.

Interacts through its C-terminus with the C-terminus of SNW1/SKIP.

It is found in the nucleus. Its function is as follows. Acts as a transcriptional repressor. May be involved in DNA damage-inducible cell cycle arrests (checkpoints). The chain is Forkhead box protein N3 (FOXN3) from Sus scrofa (Pig).